Reading from the N-terminus, the 210-residue chain is LexA repressor (210 aa).

The segment at residues 25-44 is a DNA-binding region (H-T-H motif); the sequence is AGQVAQEVGITKQAISQQVN. Residues Ser120 and Lys159 each act as for autocatalytic cleavage activity in the active site.

Belongs to the peptidase S24 family. Homodimer.

It catalyses the reaction Hydrolysis of Ala-|-Gly bond in repressor LexA.. Functionally, represses a number of genes involved in the response to DNA damage (SOS response), including recA and lexA. In the presence of single-stranded DNA, RecA interacts with LexA causing an autocatalytic cleavage which disrupts the DNA-binding part of LexA, leading to derepression of the SOS regulon and eventually DNA repair. In Deinococcus radiodurans (strain ATCC 13939 / DSM 20539 / JCM 16871 / CCUG 27074 / LMG 4051 / NBRC 15346 / NCIMB 9279 / VKM B-1422 / R1), this protein is LexA repressor.